Here is a 618-residue protein sequence, read N- to C-terminus: DNA mismatch repair protein MutL (618 aa).

Residues 366-381 are compositionally biased toward low complexity; it reads AEPTAAREPATPRYSG. Residues 366–403 are disordered; that stretch reads AEPTAAREPATPRYSGGASGGNGGRQSAGGWPHAQPGY. A compositionally biased stretch (gly residues) spans 382–392; that stretch reads GASGGNGGRQS.

This sequence belongs to the DNA mismatch repair MutL/HexB family.

Its function is as follows. This protein is involved in the repair of mismatches in DNA. It is required for dam-dependent methyl-directed DNA mismatch repair. May act as a 'molecular matchmaker', a protein that promotes the formation of a stable complex between two or more DNA-binding proteins in an ATP-dependent manner without itself being part of a final effector complex. The sequence is that of DNA mismatch repair protein MutL from Salmonella schwarzengrund (strain CVM19633).